The primary structure comprises 65 residues: Photosystem II reaction center protein J (65 aa).

The span at 1 to 17 (MSTKLKGPDGRIPDRLP) shows a compositional bias: basic and acidic residues. A disordered region spans residues 1–21 (MSTKLKGPDGRIPDRLPDGSP). Residues 36–56 (LWLVATVGGMAVLSVLGLFFF) form a helical membrane-spanning segment.

The protein belongs to the PsbJ family. In terms of assembly, PSII is composed of 1 copy each of membrane proteins PsbA, PsbB, PsbC, PsbD, PsbE, PsbF, PsbH, PsbI, PsbJ, PsbK, PsbL, PsbM, PsbT, PsbX, PsbY, Psb30/Ycf12, peripheral proteins PsbO, CyanoQ (PsbQ), PsbU, PsbV and a large number of cofactors. It forms dimeric complexes.

It is found in the cellular thylakoid membrane. Functionally, one of the components of the core complex of photosystem II (PSII). PSII is a light-driven water:plastoquinone oxidoreductase that uses light energy to abstract electrons from H(2)O, generating O(2) and a proton gradient subsequently used for ATP formation. It consists of a core antenna complex that captures photons, and an electron transfer chain that converts photonic excitation into a charge separation. This Prochlorococcus marinus (strain MIT 9313) protein is Photosystem II reaction center protein J.